The sequence spans 172 residues: Mesogenin-1 (172 aa).

The segment at 1–69 is disordered; it reads METLHHPLVK…SPYSSSSHTQ (69 aa). A compositionally biased stretch (polar residues) spans 18–29; that stretch reads SSDSEPNSSCMA. Residues 42–66 are compositionally biased toward low complexity; that stretch reads SLSQTPSPQSLSPAVSYESPYSSSS. Positions 108-162 constitute a bHLH domain; it reads QRRRKASEREKLRMRAIAEALHTLRNNLPPMYSQGRQPLTKIQTLKCTINYISEL.

Its subcellular location is the nucleus. In terms of biological role, involved in specifying the paraxial, but not dorsal, mesoderm. May regulate the expression of T-box transcription factors required for mesoderm formation and differentiation, such as brachyury T, wnt8, vegt and eomes. In Xenopus tropicalis (Western clawed frog), this protein is Mesogenin-1 (msgn1).